We begin with the raw amino-acid sequence, 124 residues long: Protein archease (124 aa).

4 residues coordinate Ca(2+): His7, Asp10, Asp123, and Thr124.

This sequence belongs to the archease family.

Its function is as follows. Activates the tRNA-splicing ligase complex by facilitating the enzymatic turnover of catalytic subunit RtcB. Acts by promoting the guanylylation of RtcB, a key intermediate step in tRNA ligation. Can also alter the NTP specificity of RtcB such that ATP, dGTP or ITP is used efficiently. May also act as a chaperone or modulator of proteins involved in DNA or RNA processing. This is Protein archease from Thermotoga maritima (strain ATCC 43589 / DSM 3109 / JCM 10099 / NBRC 100826 / MSB8).